We begin with the raw amino-acid sequence, 371 residues long: UDP-N-acetylglucosamine--N-acetylmuramyl-(pentapeptide) pyrophosphoryl-undecaprenol N-acetylglucosamine transferase (371 aa).

UDP-N-acetyl-alpha-D-glucosamine contacts are provided by residues 15-17, asparagine 126, arginine 172, serine 199, isoleucine 256, 275-280, and glutamine 301; these read TGG and ALTVSE.

The protein belongs to the glycosyltransferase 28 family. MurG subfamily.

The protein resides in the cell inner membrane. It catalyses the reaction di-trans,octa-cis-undecaprenyl diphospho-N-acetyl-alpha-D-muramoyl-L-alanyl-D-glutamyl-meso-2,6-diaminopimeloyl-D-alanyl-D-alanine + UDP-N-acetyl-alpha-D-glucosamine = di-trans,octa-cis-undecaprenyl diphospho-[N-acetyl-alpha-D-glucosaminyl-(1-&gt;4)]-N-acetyl-alpha-D-muramoyl-L-alanyl-D-glutamyl-meso-2,6-diaminopimeloyl-D-alanyl-D-alanine + UDP + H(+). It participates in cell wall biogenesis; peptidoglycan biosynthesis. Cell wall formation. Catalyzes the transfer of a GlcNAc subunit on undecaprenyl-pyrophosphoryl-MurNAc-pentapeptide (lipid intermediate I) to form undecaprenyl-pyrophosphoryl-MurNAc-(pentapeptide)GlcNAc (lipid intermediate II). The chain is UDP-N-acetylglucosamine--N-acetylmuramyl-(pentapeptide) pyrophosphoryl-undecaprenol N-acetylglucosamine transferase from Francisella tularensis subsp. mediasiatica (strain FSC147).